Reading from the N-terminus, the 330-residue chain is Aspartate--ammonia ligase (330 aa).

This sequence belongs to the class-II aminoacyl-tRNA synthetase family. AsnA subfamily.

Its subcellular location is the cytoplasm. The enzyme catalyses L-aspartate + NH4(+) + ATP = L-asparagine + AMP + diphosphate + H(+). The protein operates within amino-acid biosynthesis; L-asparagine biosynthesis; L-asparagine from L-aspartate (ammonia route): step 1/1. The protein is Aspartate--ammonia ligase of Glaesserella parasuis serovar 5 (strain SH0165) (Haemophilus parasuis).